The primary structure comprises 394 residues: E3 ubiquitin-protein ligase RNF149 (394 aa).

An N-terminal signal peptide occupies residues M1–G31. 2 N-linked (GlcNAc...) asparagine glycosylation sites follow: N51 and N141. Residues S66 to V171 enclose the PA domain. Residues V197–F217 form a helical membrane-spanning segment. An RING-type; atypical zinc finger spans residues C265–K306. Positions D321–C394 are disordered. Residue T327 is modified to Phosphothreonine. N339 carries an N-linked (GlcNAc...) asparagine glycan. S341 and S344 each carry phosphoserine. The span at S352–S362 shows a compositional bias: low complexity.

It is found in the membrane. It catalyses the reaction S-ubiquitinyl-[E2 ubiquitin-conjugating enzyme]-L-cysteine + [acceptor protein]-L-lysine = [E2 ubiquitin-conjugating enzyme]-L-cysteine + N(6)-ubiquitinyl-[acceptor protein]-L-lysine.. Its pathway is protein modification; protein ubiquitination. Its function is as follows. E3 ubiquitin-protein ligase. Ubiquitinates BRAF, inducing its proteasomal degradation. In Mus musculus (Mouse), this protein is E3 ubiquitin-protein ligase RNF149 (Rnf149).